Reading from the N-terminus, the 370-residue chain is Protein SHI RELATED SEQUENCE 1 (370 aa).

The disordered stretch occupies residues 1 to 37 (MAGFFSLDGGGGGGGGGGNNQEDHRSNTNPPPPVSEA). Gly residues predominate over residues 8-19 (DGGGGGGGGGGN). Positions 144, 147, 155, 160, 164, and 171 each coordinate Zn(2+). Residues 144–171 (CQDCGNQAKKDCSHMRCRTCCKSRGFEC) constitute a DNA-binding region (zn(2)-C6 fungal-type; degenerate). The Required for homo- and heterodimerization signature appears at 271–274 (IGGH).

This sequence belongs to the SHI protein family. In terms of assembly, forms homodimers and heterodimers with LRP1. Expressed in flowers, seeds and seedlings.

Its subcellular location is the nucleus. In terms of biological role, transcription activator that binds DNA on 5'-ACTCTAC-3' and promotes auxin homeostasis-regulating gene expression (e.g. YUC genes), as well as genes affecting stamen development, cell expansion and timing of flowering. Synergistically with other SHI-related proteins, regulates gynoecium, stamen and leaf development in a dose-dependent manner, controlling apical-basal patterning. Promotes style and stigma formation, and influences vascular development during gynoecium development. May also have a role in the formation and/or maintenance of the shoot apical meristem (SAM). The sequence is that of Protein SHI RELATED SEQUENCE 1 (SRS1) from Arabidopsis thaliana (Mouse-ear cress).